Here is a 146-residue protein sequence, read N- to C-terminus: Hemoglobin subunit beta (146 aa).

The Globin domain occupies 2-146 (HWSAEEKQLI…VAHALARKYH (145 aa)). Residues H63 and H92 each coordinate heme b.

This sequence belongs to the globin family. As to quaternary structure, heterotetramer of two alpha chains and two beta chains. As to expression, red blood cells.

Its function is as follows. Involved in oxygen transport from the lung to the various peripheral tissues. This Aptenodytes forsteri (Emperor penguin) protein is Hemoglobin subunit beta (HBB).